The following is a 374-amino-acid chain: GPN-loop GTPase 1 (374 aa).

An N-acetylalanine modification is found at alanine 2. Residue glycine 29–threonine 34 participates in GTP binding. Positions glycine 86–asparagine 88 match the Gly-Pro-Asn (GPN)-loop; involved in dimer interface motif. Asparagine 189–aspartate 192 lines the GTP pocket. Residues serine 301, serine 312, and serine 314 each carry the phosphoserine modification. The segment at arginine 326–glutamate 354 is disordered. Threonine 328 is modified (phosphothreonine). Residues aspartate 330–aspartate 342 are compositionally biased toward acidic residues. Serine 338 bears the Phosphoserine mark. Position 340 is a phosphothreonine (threonine 340). Basic and acidic residues predominate over residues isoleucine 343 to glutamate 354.

It belongs to the GPN-loop GTPase family. As to quaternary structure, heterodimer with GPN3. Binds to RNA polymerase II (RNAPII). Interacts directly with RNAPII subunits RPB4 and RPB7 and the CTD of RPB1. Interacts with XPA. In terms of tissue distribution, expressed ubiquitously.

The protein localises to the cytoplasm. It is found in the nucleus. In terms of biological role, small GTPase required for proper nuclear import of RNA polymerase II (RNAPII). May act at an RNAP assembly step prior to nuclear import. Forms an interface between the RNA polymerase II enzyme and chaperone/scaffolding proteins, suggesting that it is required to connect RNA polymerase II to regulators of protein complex formation. May be involved in nuclear localization of XPA. The protein is GPN-loop GTPase 1 of Homo sapiens (Human).